Reading from the N-terminus, the 471-residue chain is MVEVEELEPLSPMDDEEEEISYDDLKRRMWKDRNLMEKKLKQQKRHSNDVVSFTTHRAEASRRKKMARSQDSVLKYMMKIMEVCKAKGFVYGIVPEKGKPITGSSDSLRRWWKENVQFDQNAPDAITDYLALAAAAAAAELIDKSSSSSSLLHMLQELQDTTLGSLLSALMQHCMPPQRRFPLEKGIAPPWWPTGTELWWGEQGAAHEHGAPPYRKPHDLRKSWKVSVLAAVIKHMSPNLGRVRRLARQSKSLQDKMMAKETDTWSRVLNQEEALLNIKDLKISEDQDDQESSGSKRKSESMEPSKSVYTCQNSSCPKSDVSFGFGDKNSRTGHEIQCLYGSNQEPSQSGEYTSSLLETVPSIVTNSTSEDDYYNVSSRALDKRDDDDHSINGNWMEYFWLEKMQQEFHCSRRFEDDEGTGTDFDQLTESDRSDNVNLNQLTKSDRSDNVNRSAFSVWDMGCEDKDIYMFD.

The interval 280 to 316 is disordered; that stretch reads DLKISEDQDDQESSGSKRKSESMEPSKSVYTCQNSSC. Residues 304–316 are compositionally biased toward polar residues; that stretch reads PSKSVYTCQNSSC.

It belongs to the EIN3 family.

Its subcellular location is the nucleus. Its function is as follows. Putative transcription factor that may be involved in the ethylene response pathway. In Arabidopsis thaliana (Mouse-ear cress), this protein is Putative ETHYLENE INSENSITIVE 3-like 4 protein (EIL4).